The following is a 406-amino-acid chain: Autotransporter heptosyltransferase TibC (406 aa).

3 residues coordinate ADP-D-glycero-beta-D-manno-heptose: Thr-107, Leu-108, and Gly-109. Asp-110 acts as the Proton acceptor in catalysis. The ADP-D-glycero-beta-D-manno-heptose site is built by Gln-224, Thr-226, Lys-230, Arg-257, Leu-281, Gly-302, and Glu-326. Fe(3+) contacts are provided by Cys-339, Cys-342, Cys-358, and Cys-370.

This sequence belongs to the glycosyltransferase 9 family. In terms of assembly, homododecamer composed of 6 homodimers forming a ring. Requires Fe(3+) as cofactor.

It catalyses the reaction ADP-D-glycero-beta-D-manno-heptose + L-seryl-[protein] = O-(D-glycero-alpha-D-manno-heptosyl)-L-seryl-[protein] + ADP + H(+). Glycosylates adhesin TibA. Specifically adds anomer D-glycero-beta-D-manno-heptose. Cannot use ADP-L-glycero-beta-D-manno-heptose as a sugar donor. The sequence is that of Autotransporter heptosyltransferase TibC from Escherichia coli O78:H11 (strain H10407 / ETEC).